The primary structure comprises 822 residues: Valine--tRNA ligase (822 aa).

The 'HIGH' region motif lies at 41–51 (PNVTGQLHLGH). The 'KMSKS' region signature appears at 511 to 515 (KMSKS). Residue K514 participates in ATP binding. Residues 765–822 (EQKGRELKEIQFLKSEILRAEKILTNKGFLEKAPREKIDLERTKLEKLKEKLVFYEKK) adopt a coiled-coil conformation.

The protein belongs to the class-I aminoacyl-tRNA synthetase family. ValS type 1 subfamily. In terms of assembly, monomer.

The protein resides in the cytoplasm. The catalysed reaction is tRNA(Val) + L-valine + ATP = L-valyl-tRNA(Val) + AMP + diphosphate. Functionally, catalyzes the attachment of valine to tRNA(Val). As ValRS can inadvertently accommodate and process structurally similar amino acids such as threonine, to avoid such errors, it has a 'posttransfer' editing activity that hydrolyzes mischarged Thr-tRNA(Val) in a tRNA-dependent manner. The sequence is that of Valine--tRNA ligase from Mesomycoplasma hyopneumoniae (strain J / ATCC 25934 / NCTC 10110) (Mycoplasma hyopneumoniae).